The primary structure comprises 115 residues: U3-lycotoxin-Ls1a (115 aa).

Residues 1-20 form the signal peptide; sequence MKFVLLFGVFLVTLFSYSSA. Residues 21 to 44 constitute a propeptide that is removed on maturation; it reads EMLDDFDQADEDELLSLIEKEEAR. 4 disulfide bridges follow: Cys48–Cys63, Cys55–Cys72, Cys62–Cys87, and Cys74–Cys85.

Belongs to the neurotoxin 19 (CSTX) family. 01 subfamily. In terms of tissue distribution, expressed by the venom gland.

It is found in the secreted. This Lycosa singoriensis (Wolf spider) protein is U3-lycotoxin-Ls1a.